Here is a 115-residue protein sequence, read N- to C-terminus: Chaperone protein PrsD (115 aa).

It belongs to the periplasmic pilus chaperone family.

It localises to the periplasm. Mediates assembly of pili by forming soluble multimeric complexes with pili subunits as an intermediate step in the assembly process. In Escherichia coli, this protein is Chaperone protein PrsD (prsD).